The sequence spans 202 residues: FMN-dependent NADH:quinone oxidoreductase (202 aa).

FMN is bound by residues Ser10 and 95–98 (MYNF).

This sequence belongs to the azoreductase type 1 family. Homodimer. It depends on FMN as a cofactor.

The enzyme catalyses 2 a quinone + NADH + H(+) = 2 a 1,4-benzosemiquinone + NAD(+). The catalysed reaction is N,N-dimethyl-1,4-phenylenediamine + anthranilate + 2 NAD(+) = 2-(4-dimethylaminophenyl)diazenylbenzoate + 2 NADH + 2 H(+). Quinone reductase that provides resistance to thiol-specific stress caused by electrophilic quinones. Functionally, also exhibits azoreductase activity. Catalyzes the reductive cleavage of the azo bond in aromatic azo compounds to the corresponding amines. In Alkalilimnicola ehrlichii (strain ATCC BAA-1101 / DSM 17681 / MLHE-1), this protein is FMN-dependent NADH:quinone oxidoreductase.